Here is a 496-residue protein sequence, read N- to C-terminus: Cytochrome P450 monooxygenase ausR (496 aa).

A helical membrane pass occupies residues 12-32; sequence IGLYILWTIPVLFVIFKLLAP. Heme is bound at residue Cys435.

This sequence belongs to the cytochrome P450 family. Heme is required as a cofactor.

The protein resides in the membrane. It participates in secondary metabolite biosynthesis; terpenoid biosynthesis. Cytochrome P450 monooxygenase; part of the gene cluster B that mediates the biosynthesis of the fungal meroterpenoid acetoxydehydroaustin. The first step of the pathway is the synthesis of 3,5-dimethylorsellinic acid by the polyketide synthase ausA. 3,5-dimethylorsellinic acid is then prenylated by the polyprenyl transferase ausN. Further epoxidation by the FAD-dependent monooxygenase ausM and cyclization by the probable terpene cyclase ausL lead to the formation of protoaustinoid A. Protoaustinoid A is then oxidized to spiro-lactone preaustinoid A3 by the combined action of the FAD-binding monooxygenases ausB and ausC, and the dioxygenase ausE. Acid-catalyzed keto-rearrangement and ring contraction of the tetraketide portion of preaustinoid A3 by ausJ lead to the formation of preaustinoid A4. The aldo-keto reductase ausK, with the help of ausH, is involved in the next step by transforming preaustinoid A4 into isoaustinone which is in turn hydroxylated by the P450 monooxygenase ausI to form austinolide. The cytochrome P450 monooxygenase ausG then modifies austinolide to austinol. Austinol is further acetylated to austin by the O-acetyltransferase ausP, which spontaneously changes to dehydroaustin. The cytochrome P450 monooxygenase then converts dehydroaustin is into 7-dehydrodehydroaustin. The hydroxylation catalyzed by ausR permits the second O-acetyltransferase ausQ to add an additional acetyl group to the molecule, leading to the formation of acetoxydehydroaustin. Due to genetic rearrangements of the clusters and the subsequent loss of some enzymes, the end product of the Penicillium brasilianum austinoid biosynthesis clusters is acetoxydehydroaustin. The protein is Cytochrome P450 monooxygenase ausR of Penicillium brasilianum.